The primary structure comprises 1711 residues: Nuclear pore complex protein Nup214 (1711 aa).

8 consecutive repeat copies span residues Phe472–Gly473, Phe486–Gly487, Phe497–Gly498, Phe511–Gly512, Phe514–Gly515, Phe535–Gly536, Thr588–Ser589, and Ser598–Leu599. Positions Phe472–Gly1703 are 45 X 2 AA repeats of F-G. Leucine-zipper stretches follow at residues Leu650–Leu672 and Leu767–Leu788. Positions Lys886–Asp905 are disordered. Copy 9 of the repeat occupies Phe1009–Gly1010. The segment at Gly1012–Thr1081 is disordered. Composition is skewed to basic and acidic residues over residues Thr1037–Lys1051 and Glu1058–Asn1072. The tract at residues Ala1044–Arg1711 is interaction with emb. A run of 8 repeats spans residues Phe1075 to Gly1076, Phe1077 to Gly1078, Phe1097 to Gly1098, Phe1106 to Gly1107, Phe1135 to Gly1136, Phe1218 to Gly1219, Phe1229 to Gly1230, and Phe1240 to Gly1241. Polar residues predominate over residues Thr1251–Asp1261. Positions Thr1251–Ile1270 are disordered. A run of 27 repeats spans residues Phe1356 to Gly1357, Phe1388 to Gly1389, Phe1399 to Gly1400, Phe1434 to Gly1435, Phe1449 to Gly1450, Phe1458 to Gly1459, Phe1472 to Gly1473, Phe1481 to Gly1482, Phe1487 to Gly1488, Phe1507 to Gly1508, Phe1512 to Gly1513, Phe1539 to Gly1540, Phe1547 to Gly1548, Phe1562 to Gly1563, Phe1571 to Gly1572, Phe1584 to Gly1585, Phe1588 to Gly1589, Phe1601 to Gly1602, Phe1617 to Gly1618, Phe1623 to Gly1624, Phe1629 to Gly1630, Phe1635 to Gly1636, Phe1641 to Gly1642, Phe1647 to Gly1648, Phe1650 to Gly1651, Phe1662 to Gly1663, and Phe1686 to Gly1687. Disordered regions lie at residues Ser1533 to Thr1552 and Ser1557 to Pro1614. 2 stretches are compositionally biased toward gly residues: residues Ser1560–Gly1572 and Gly1582–Ser1595. Residues Val1596–Pro1614 are compositionally biased toward low complexity. Over residues Asn1688 to Gln1698 the composition is skewed to polar residues. The tract at residues Asn1688 to Arg1711 is disordered. The stretch at Phe1702–Gly1703 is repeat 45.

In terms of assembly, component of the nuclear pore complex. Interacts with mbo/Nup88 and (via C-terminus) with emb to attenuate emb-mediated protein export.

It is found in the nucleus. It localises to the nuclear pore complex. The protein localises to the nucleus membrane. Functionally, part of the nuclear pore complex. Serves as a docking site in the receptor-mediated import of substrates across the nuclear pore complex including emb, RanGAP and phosphorylated Mad. Protects mbo/Nup88 from proteasomal degradation at the nuclear pore. Together with mbo/Nup88, sequesters emb in the cytoplasm and thereby attenuates nuclear export signal (NES)-mediated nuclear export. Together with mbo/Nup88, required for the nuclear import of the Rel family transcription factors dorsal (dl) and Dorsal-related immunity factor (Dif) and the activation of an immune response. This Drosophila melanogaster (Fruit fly) protein is Nuclear pore complex protein Nup214.